Here is a 689-residue protein sequence, read N- to C-terminus: Methionine--tRNA ligase (689 aa).

The 'HIGH' region signature appears at 15 to 25 (PYANGPIHLGH). The Zn(2+) site is built by Cys146, Cys149, Cys159, and Cys162. Residues 332–336 (KMSKS) carry the 'KMSKS' region motif. Lys335 contacts ATP. A tRNA-binding domain is found at 588–689 (DFAKIDLRIA…EGAQPGMRVK (102 aa)).

Belongs to the class-I aminoacyl-tRNA synthetase family. MetG type 1 subfamily. In terms of assembly, homodimer. Zn(2+) is required as a cofactor.

It localises to the cytoplasm. The catalysed reaction is tRNA(Met) + L-methionine + ATP = L-methionyl-tRNA(Met) + AMP + diphosphate. In terms of biological role, is required not only for elongation of protein synthesis but also for the initiation of all mRNA translation through initiator tRNA(fMet) aminoacylation. The chain is Methionine--tRNA ligase from Shewanella baltica (strain OS223).